Here is a 90-residue protein sequence, read N- to C-terminus: MVKNSFISLIPQEEKEENRGSVEFQVFSFTNKIRRLTSHLELHRKDYLSQRGLRKILGKRQRLLAYLSKKNRVRYNKLIGQLDIREPKTR.

Belongs to the universal ribosomal protein uS15 family. In terms of assembly, part of the 30S ribosomal subunit.

It is found in the plastid. Its subcellular location is the chloroplast. In Acorus calamus (Sweet flag), this protein is Small ribosomal subunit protein uS15c (rps15).